The sequence spans 308 residues: Glutathione synthetase (308 aa).

An ATP-grasp domain is found at 117 to 300 (KLLPLSFPKF…LERDCWDYFE (184 aa)). Position 143–198 (143–198 (YAEYGDIVLKPLYDYGGNGVCRICGRADVGAISSAMVERYEAPLVAQQFIDDISSD)) interacts with ATP. The Mg(2+) site is built by Glu-271 and Asn-273.

The protein belongs to the prokaryotic GSH synthase family. Mg(2+) serves as cofactor. Mn(2+) is required as a cofactor.

It carries out the reaction gamma-L-glutamyl-L-cysteine + glycine + ATP = glutathione + ADP + phosphate + H(+). It participates in sulfur metabolism; glutathione biosynthesis; glutathione from L-cysteine and L-glutamate: step 2/2. This Anaplasma centrale protein is Glutathione synthetase.